The chain runs to 131 residues: Large ribosomal subunit protein bL19 (131 aa).

It belongs to the bacterial ribosomal protein bL19 family.

In terms of biological role, this protein is located at the 30S-50S ribosomal subunit interface and may play a role in the structure and function of the aminoacyl-tRNA binding site. This chain is Large ribosomal subunit protein bL19, found in Polynucleobacter necessarius subsp. necessarius (strain STIR1).